The chain runs to 252 residues: 5'-nucleotidase SurE (252 aa).

A divalent metal cation-binding residues include Asp8, Asp9, Ser40, and Asn93.

The protein belongs to the SurE nucleotidase family. A divalent metal cation is required as a cofactor.

The protein resides in the cytoplasm. The enzyme catalyses a ribonucleoside 5'-phosphate + H2O = a ribonucleoside + phosphate. Functionally, nucleotidase that shows phosphatase activity on nucleoside 5'-monophosphates. The protein is 5'-nucleotidase SurE of Methylocella silvestris (strain DSM 15510 / CIP 108128 / LMG 27833 / NCIMB 13906 / BL2).